Consider the following 768-residue polypeptide: Gephyrin (768 aa).

The MPT Mo-transferase stretch occupies residues 14–166 (QIRVGVLTVS…LPGSKKGSQE (153 aa)). The tract at residues 153–348 (LIINLPGSKK…VDITKVARRH (196 aa)) is interaction with GABARAP. Disordered stretches follow at residues 194 to 245 (DELE…DSSS) and 273 to 316 (TASL…ASRV). The span at 200-212 (PSPPPPLSPPPTT) shows a compositional bias: pro residues. Phosphoserine is present on residues S201 and S207. At T211 the chain carries Phosphothreonine. Position 213 is a phosphoserine (S213). Residue C225 is the site of S-palmitoyl cysteine attachment. A compositionally biased stretch (polar residues) spans 274 to 299 (ASLSTTPSESPRAQATSRLSTASCPT). S275 is subject to Phosphoserine. Phosphothreonine is present on residues T278 and T279. Phosphoserine occurs at positions 281 and 283. Residue C297 is the site of S-palmitoyl cysteine attachment. The interval 326 to 768 (SSKENILRAS…VVDVMVIGRL (443 aa)) is MPT adenylyltransferase. The residue at position 337 (S337) is a Phosphoserine.

It in the N-terminal section; belongs to the MoaB/Mog family. In the C-terminal section; belongs to the MoeA family. In terms of assembly, homotrimer, homodimer and homooligomer. Interacts with SRGAP2 (via SH3 domain). Interacts with GLRB. Interacts with GABARAP. Interacts with GABRA3. GABRA3 and GLRB occupy overlapping binding sites. Interacts with ARHGAP32; IQSEC3, INSYN1 and INSYN2A. The cofactor is Mg(2+). Phosphorylated. In terms of processing, palmitoylated. Palmitoylation is stimulated by GABA type A receptors activity. Palmitoylation by ZDHHC12 regulates clustering at synapses. In terms of tissue distribution, expressed in tissues including spinal cord, brain, liver, kidney and lung.

The protein localises to the postsynaptic cell membrane. The protein resides in the cell membrane. It is found in the cytoplasm. It localises to the cytosol. Its subcellular location is the cytoskeleton. The protein localises to the cell projection. The protein resides in the dendrite. It is found in the postsynaptic density. It carries out the reaction molybdopterin + ATP + H(+) = adenylyl-molybdopterin + diphosphate. It catalyses the reaction adenylyl-molybdopterin + molybdate = Mo-molybdopterin + AMP + H(+). It participates in cofactor biosynthesis; molybdopterin biosynthesis. With respect to regulation, inhibited by copper and tungsten. Its function is as follows. Microtubule-associated protein involved in membrane protein-cytoskeleton interactions. It is thought to anchor the inhibitory glycine receptor (GLYR) to subsynaptic microtubules. Acts as a major instructive molecule at inhibitory synapses, where it also clusters GABA type A receptors. In terms of biological role, also has a catalytic activity and catalyzes two steps in the biosynthesis of the molybdenum cofactor. In the first step, molybdopterin is adenylated. Subsequently, molybdate is inserted into adenylated molybdopterin and AMP is released. The protein is Gephyrin (Gphn) of Rattus norvegicus (Rat).